The following is a 317-amino-acid chain: tRNA dimethylallyltransferase (317 aa).

14–21 (GPTAVGKT) contributes to the ATP binding site. Residue 16-21 (TAVGKT) coordinates substrate. Positions 39-42 (DSMQ) are interaction with substrate tRNA.

This sequence belongs to the IPP transferase family. Monomer. Mg(2+) is required as a cofactor.

It catalyses the reaction adenosine(37) in tRNA + dimethylallyl diphosphate = N(6)-dimethylallyladenosine(37) in tRNA + diphosphate. Functionally, catalyzes the transfer of a dimethylallyl group onto the adenine at position 37 in tRNAs that read codons beginning with uridine, leading to the formation of N6-(dimethylallyl)adenosine (i(6)A). This chain is tRNA dimethylallyltransferase, found in Bacillus cereus (strain ATCC 14579 / DSM 31 / CCUG 7414 / JCM 2152 / NBRC 15305 / NCIMB 9373 / NCTC 2599 / NRRL B-3711).